The primary structure comprises 197 residues: NADH-quinone oxidoreductase subunit B (197 aa).

Positions 63, 64, 129, and 159 each coordinate [4Fe-4S] cluster.

The protein belongs to the complex I 20 kDa subunit family. In terms of assembly, NDH-1 is composed of 14 different subunits. Subunits NuoB, C, D, E, F, and G constitute the peripheral sector of the complex. Requires [4Fe-4S] cluster as cofactor.

The protein localises to the cell inner membrane. It catalyses the reaction a quinone + NADH + 5 H(+)(in) = a quinol + NAD(+) + 4 H(+)(out). NDH-1 shuttles electrons from NADH, via FMN and iron-sulfur (Fe-S) centers, to quinones in the respiratory chain. The immediate electron acceptor for the enzyme in this species is believed to be a menaquinone. Couples the redox reaction to proton translocation (for every two electrons transferred, four hydrogen ions are translocated across the cytoplasmic membrane), and thus conserves the redox energy in a proton gradient. In Bacteroides thetaiotaomicron (strain ATCC 29148 / DSM 2079 / JCM 5827 / CCUG 10774 / NCTC 10582 / VPI-5482 / E50), this protein is NADH-quinone oxidoreductase subunit B.